Consider the following 55-residue polypeptide: Large ribosomal subunit protein bL33 (55 aa).

Belongs to the bacterial ribosomal protein bL33 family.

This chain is Large ribosomal subunit protein bL33, found in Rhizorhabdus wittichii (strain DSM 6014 / CCUG 31198 / JCM 15750 / NBRC 105917 / EY 4224 / RW1) (Sphingomonas wittichii).